A 289-amino-acid chain; its full sequence is Early E4 34 kDa protein (289 aa).

It belongs to the adenoviridae E4 30 to 34 kDa protein family. In terms of assembly, interacts with E1B-55k.

The protein resides in the host nucleus. It is found in the host cytoplasm. Functionally, plays a major role to prevent cellular inhibition of viral genome replication by nuclear bodies. Assembles an SCF-like E3 ubiquitin ligase complex based on the cellular proteins ELOB, ELOC, CUL5 and RBX1, in cooperation with viral E1B-55K. This viral RING-type ligase ubiquitinates cellular substrates prior to proteasomal degradation: p53/TP53, LIG4, MRE11-RAD50-NBS1 (MRN) complex, ITGA3, DAXX and BLM. This chain is Early E4 34 kDa protein, found in Human adenovirus F serotype 40 (HAdV-40).